A 1890-amino-acid polypeptide reads, in one-letter code: Putative aminopeptidase-2 (1890 aa).

The first 20 residues, 1 to 20 (MRRKLLLLLCFIGLFSLIST), serve as a signal peptide directing secretion. N110 carries N-linked (GlcNAc...) asparagine glycosylation. Substrate-binding positions include E220 and 354–358 (GAMEN). H390 is a Zn(2+) binding site. E391 acts as the Proton acceptor in catalysis. Zn(2+) is bound by residues H394 and E413. N-linked (GlcNAc...) asparagine glycosylation is found at N534, N581, N785, N803, N914, N1024, and N1094. E1143 is a substrate binding site. N1245 carries N-linked (GlcNAc...) asparagine glycosylation. Residue 1280-1284 (GAMEN) participates in substrate binding. H1316 is a Zn(2+) binding site. The active-site Proton acceptor is E1317. H1320 and E1339 together coordinate Zn(2+). N-linked (GlcNAc...) asparagine glycans are attached at residues N1451, N1521, N1826, and N1841.

The protein belongs to the peptidase M1 family. Zn(2+) serves as cofactor.

Functionally, putative aminopeptidase which plays a role in oocyte maturation. The polypeptide is Putative aminopeptidase-2 (Caenorhabditis elegans).